Reading from the N-terminus, the 62-residue chain is Large ribosomal subunit protein eL37 (62 aa).

Residues Cys-20, Cys-23, Cys-35, and Cys-38 each contribute to the Zn(2+) site. The C4-type zinc-finger motif lies at 20–38 (CRRCGRKAFNVKKGYCAAC).

This sequence belongs to the eukaryotic ribosomal protein eL37 family. The cofactor is Zn(2+).

Binds to the 23S rRNA. The sequence is that of Large ribosomal subunit protein eL37 (rpl37e) from Pyrococcus abyssi (strain GE5 / Orsay).